The following is a 126-amino-acid chain: Protein Wnt-7(II) (126 aa).

Residue S1 is the site of O-palmitoleoyl serine; by PORCN attachment. A disulfide bridge connects residues C92 and C107. A glycan (N-linked (GlcNAc...) asparagine) is linked at N93.

It belongs to the Wnt family. Post-translationally, palmitoleoylation is required for efficient binding to frizzled receptors. Depalmitoleoylation leads to Wnt signaling pathway inhibition.

The protein resides in the secreted. It localises to the extracellular space. It is found in the extracellular matrix. Its function is as follows. Ligand for members of the frizzled family of seven transmembrane receptors. Probable developmental protein. May be a signaling molecule which affects the development of discrete regions of tissues. Is likely to signal over only few cell diameters. This is Protein Wnt-7(II) (WNT-7(II)) from Eptatretus stoutii (Pacific hagfish).